A 742-amino-acid polypeptide reads, in one-letter code: Phosphoribosylformylglycinamidine synthase subunit PurL (742 aa).

The active site involves His53. ATP is bound by residues Tyr56 and Lys95. Glu97 contributes to the Mg(2+) binding site. Substrate is bound by residues 98-101 (SHNH) and Arg120. The active-site Proton acceptor is His99. Asp121 contacts Mg(2+). Gln244 provides a ligand contact to substrate. Residue Asp274 coordinates Mg(2+). 318–320 (ESQ) is a substrate binding site. Positions 501 and 538 each coordinate ATP. Mg(2+) is bound at residue Asn539. Ser541 is a binding site for substrate.

Belongs to the FGAMS family. In terms of assembly, monomer. Part of the FGAM synthase complex composed of 1 PurL, 1 PurQ and 2 PurS subunits.

It localises to the cytoplasm. The enzyme catalyses N(2)-formyl-N(1)-(5-phospho-beta-D-ribosyl)glycinamide + L-glutamine + ATP + H2O = 2-formamido-N(1)-(5-O-phospho-beta-D-ribosyl)acetamidine + L-glutamate + ADP + phosphate + H(+). It functions in the pathway purine metabolism; IMP biosynthesis via de novo pathway; 5-amino-1-(5-phospho-D-ribosyl)imidazole from N(2)-formyl-N(1)-(5-phospho-D-ribosyl)glycinamide: step 1/2. Its function is as follows. Part of the phosphoribosylformylglycinamidine synthase complex involved in the purines biosynthetic pathway. Catalyzes the ATP-dependent conversion of formylglycinamide ribonucleotide (FGAR) and glutamine to yield formylglycinamidine ribonucleotide (FGAM) and glutamate. The FGAM synthase complex is composed of three subunits. PurQ produces an ammonia molecule by converting glutamine to glutamate. PurL transfers the ammonia molecule to FGAR to form FGAM in an ATP-dependent manner. PurS interacts with PurQ and PurL and is thought to assist in the transfer of the ammonia molecule from PurQ to PurL. This Limosilactobacillus reuteri (strain DSM 20016) (Lactobacillus reuteri) protein is Phosphoribosylformylglycinamidine synthase subunit PurL.